The primary structure comprises 248 residues: Ribonuclease PH (248 aa).

Phosphate is bound by residues Arg-86 and 124 to 126 (GTR).

The protein belongs to the RNase PH family. In terms of assembly, homohexameric ring arranged as a trimer of dimers.

It carries out the reaction tRNA(n+1) + phosphate = tRNA(n) + a ribonucleoside 5'-diphosphate. In terms of biological role, phosphorolytic 3'-5' exoribonuclease that plays an important role in tRNA 3'-end maturation. Removes nucleotide residues following the 3'-CCA terminus of tRNAs; can also add nucleotides to the ends of RNA molecules by using nucleoside diphosphates as substrates, but this may not be physiologically important. Probably plays a role in initiation of 16S rRNA degradation (leading to ribosome degradation) during starvation. The sequence is that of Ribonuclease PH from Clostridium perfringens (strain ATCC 13124 / DSM 756 / JCM 1290 / NCIMB 6125 / NCTC 8237 / Type A).